The primary structure comprises 115 residues: Probable non-functional T cell receptor beta variable 23-1 (115 aa).

The first 21 residues, 1–21, serve as a signal peptide directing secretion; the sequence is MGTRLLGCAALCLLAADSFHA. The 94-residue stretch at 22 to 115 folds into the Ig-like domain; the sequence is KVTQTPGHLV…TALYLCASSQ (94 aa). A disulfide bridge links Cys-42 with Cys-111.

Alpha-beta TR is a heterodimer composed of an alpha and beta chain; disulfide-linked. The alpha-beta TR is associated with the transmembrane signaling CD3 coreceptor proteins to form the TR-CD3 (TcR or TCR). The assembly of alpha-beta TR heterodimers with CD3 occurs in the endoplasmic reticulum where a single alpha-beta TR heterodimer associates with one CD3D-CD3E heterodimer, one CD3G-CD3E heterodimer and one CD247 homodimer forming a stable octameric structure. CD3D-CD3E and CD3G-CD3E heterodimers preferentially associate with TR alpha and TR beta chains, respectively. The association of the CD247 homodimer is the last step of TcR assembly in the endoplasmic reticulum and is required for transport to the cell surface.

Its subcellular location is the cell membrane. Probable non-functional open reading frame (ORF) of V region of the variable domain of T cell receptor (TR) beta chain. Non-functional ORF generally cannot participate in the synthesis of a productive T cell receptor (TR) chain due to altered V-(D)-J or switch recombination and/or splicing site (at mRNA level) and/or conserved amino acid change (protein level). Alpha-beta T cell receptors are antigen specific receptors which are essential to the immune response and are present on the cell surface of T lymphocytes. Recognize peptide-major histocompatibility (MH) (pMH) complexes that are displayed by antigen presenting cells (APC), a prerequisite for efficient T cell adaptive immunity against pathogens. Binding of alpha-beta TR to pMH complex initiates TR-CD3 clustering on the cell surface and intracellular activation of LCK that phosphorylates the ITAM motifs of CD3G, CD3D, CD3E and CD247 enabling the recruitment of ZAP70. In turn ZAP70 phosphorylates LAT, which recruits numerous signaling molecules to form the LAT signalosome. The LAT signalosome propagates signal branching to three major signaling pathways, the calcium, the mitogen-activated protein kinase (MAPK) kinase and the nuclear factor NF-kappa-B (NF-kB) pathways, leading to the mobilization of transcription factors that are critical for gene expression and essential for T cell growth and differentiation. The T cell repertoire is generated in the thymus, by V-(D)-J rearrangement. This repertoire is then shaped by intrathymic selection events to generate a peripheral T cell pool of self-MH restricted, non-autoaggressive T cells. Post-thymic interaction of alpha-beta TR with the pMH complexes shapes TR structural and functional avidity. This is Probable non-functional T cell receptor beta variable 23-1 from Homo sapiens (Human).